The primary structure comprises 138 residues: MCKKIMNPSFADLPSSLIEVIMSHLALKNNIRASAACKSWYEVGVSVRVVEKHPWLICFPKRGNLFEFRDPLHWKLYTLGLPELAESTVCYSRFGWLLMRKATSKDVFFFNPFSRDIISLPKCELAFEHITFYCPHIR.

An F-box domain is found at 7-53 (NPSFADLPSSLIEVIMSHLALKNNIRASAACKSWYEVGVSVRVVEKH).

The protein is F-box protein At4g12382 of Arabidopsis thaliana (Mouse-ear cress).